The sequence spans 249 residues: 3-deoxy-manno-octulosonate cytidylyltransferase (249 aa).

The protein belongs to the KdsB family.

Its subcellular location is the cytoplasm. It carries out the reaction 3-deoxy-alpha-D-manno-oct-2-ulosonate + CTP = CMP-3-deoxy-beta-D-manno-octulosonate + diphosphate. It functions in the pathway nucleotide-sugar biosynthesis; CMP-3-deoxy-D-manno-octulosonate biosynthesis; CMP-3-deoxy-D-manno-octulosonate from 3-deoxy-D-manno-octulosonate and CTP: step 1/1. It participates in bacterial outer membrane biogenesis; lipopolysaccharide biosynthesis. Its function is as follows. Activates KDO (a required 8-carbon sugar) for incorporation into bacterial lipopolysaccharide in Gram-negative bacteria. This Serratia proteamaculans (strain 568) protein is 3-deoxy-manno-octulosonate cytidylyltransferase.